We begin with the raw amino-acid sequence, 239 residues long: Tetrahydromethanopterin S-methyltransferase subunit A (239 aa).

Residues 1–215 lie on the Cytoplasmic side of the membrane; sequence MANKKSPAAT…EAAMIAKFNS (215 aa). Residue H85 coordinates 5-hydroxybenzimidazolylcob(I)amide. Residues 216-238 form a helical membrane-spanning segment; it reads GYYNGKIQGIAIGLFLSILVFSL. Residue L239 is a topological domain, extracellular.

Belongs to the MtrA family. In terms of assembly, the complex is composed of 8 subunits; MtrA, MtrB, MtrC, MtrD, MtrE, MtrF, MtrG and MtrH. 5-hydroxybenzimidazolylcob(I)amide serves as cofactor.

Its subcellular location is the cell membrane. It catalyses the reaction 5-methyl-5,6,7,8-tetrahydromethanopterin + coenzyme M + 2 Na(+)(in) = 5,6,7,8-tetrahydromethanopterin + methyl-coenzyme M + 2 Na(+)(out). It participates in one-carbon metabolism; methanogenesis from CO(2); methyl-coenzyme M from 5,10-methylene-5,6,7,8-tetrahydromethanopterin: step 2/2. Part of a complex that catalyzes the formation of methyl-coenzyme M and tetrahydromethanopterin from coenzyme M and methyl-tetrahydromethanopterin. This is an energy-conserving, sodium-ion translocating step. This Methanococcus maripaludis (strain C7 / ATCC BAA-1331) protein is Tetrahydromethanopterin S-methyltransferase subunit A.